We begin with the raw amino-acid sequence, 753 residues long: 5-methyltetrahydropteroyltriglutamate--homocysteine methyltransferase (753 aa).

Residues 17-20 (RELK) and K117 each bind 5-methyltetrahydropteroyltri-L-glutamate. L-homocysteine-binding positions include 431-433 (IGS) and E484. L-methionine contacts are provided by residues 431 to 433 (IGS) and E484. Residues 515–516 (RC) and W561 contribute to the 5-methyltetrahydropteroyltri-L-glutamate site. D599 provides a ligand contact to L-homocysteine. Residue D599 coordinates L-methionine. 5-methyltetrahydropteroyltri-L-glutamate is bound at residue E605. Positions 641, 643, and 665 each coordinate Zn(2+). H694 acts as the Proton donor in catalysis. Position 726 (C726) interacts with Zn(2+).

Belongs to the vitamin-B12 independent methionine synthase family. Zn(2+) is required as a cofactor.

The enzyme catalyses 5-methyltetrahydropteroyltri-L-glutamate + L-homocysteine = tetrahydropteroyltri-L-glutamate + L-methionine. Its pathway is amino-acid biosynthesis; L-methionine biosynthesis via de novo pathway; L-methionine from L-homocysteine (MetE route): step 1/1. Functionally, catalyzes the transfer of a methyl group from 5-methyltetrahydrofolate to homocysteine resulting in methionine formation. This chain is 5-methyltetrahydropteroyltriglutamate--homocysteine methyltransferase, found in Shigella sonnei (strain Ss046).